A 348-amino-acid chain; its full sequence is Cyclic AMP-dependent transcription factor ATF-4 (348 aa).

A Glycyl lysine isopeptide (Lys-Gly) (interchain with G-Cter in SUMO2) cross-link involves residue Lys-53. Disordered regions lie at residues Gln-151 to His-174 and Pro-187 to Met-265. Phosphoserine occurs at positions 211, 215, 220, 227, and 231. The BetaTrCP degron motif motif lies at Ser-211–Ser-220. Polar residues predominate over residues Pro-221–Lys-241. Pro-232 is subject to 4-hydroxyproline. Phosphoserine occurs at positions 242 and 245. The span at Ser-242–Ser-253 shows a compositional bias: low complexity. Residues Lys-256, Lys-264, and Lys-269 each participate in a glycyl lysine isopeptide (Lys-Gly) (interchain with G-Cter in SUMO2) cross-link. The bZIP domain occupies Leu-275–Val-338. Residues Lys-277 to Arg-297 form a basic motif region. Residues Ala-302–Val-338 are interaction with GABBR1. A leucine-zipper region spans residues Leu-303–Leu-331. Lys-308 carries the post-translational modification N6-acetyllysine.

The protein belongs to the bZIP family. In terms of assembly, binds DNA as a homodimer and as a heterodimer. Heterodimer; heterodimerizes with CEBPB. Heterodimer; heterodimerizes with DDIT3/CHOP. Interacts with CEP290 (via an N-terminal region). Interacts with NEK6, DAPK2 (isoform 2) and ZIPK/DAPK3. Interacts (via its leucine zipper domain) with GABBR1 and GABBR2 (via their C-termini). Forms a heterodimer with TXLNG in osteoblasts. Interacts (via its DNA binding domain) with FOXO1 (C-terminal half); the interaction occurs in osteoblasts and regulates glucose homeostasis through suppression of beta-cell proliferation and a decrease in insulin production. Interacts with SATB2; the interaction results in enhanced DNA binding and transactivation by these transcription factors. Interacts with ABRAXAS2. Interacts with TRIB3, inhibiting the transactivation activity of ATF4. Interacts with DISC1; which inhibits ATF4 transcription factor activity by disrupting ATF4 dimerization and DNA-binding. Interacts with EP300/p300; EP300/p300 stabilizes ATF4 and increases its transcriptional activity independently of its catalytic activity by preventing its ubiquitination. In terms of processing, ubiquitinated by SCF(BTRC) in response to mTORC1 signal, followed by proteasomal degradation and leading to down-regulate expression of SIRT4. Interaction with EP300/p300 inhibits ubiquitination by SCF(BTRC). Post-translationally, phosphorylation at Ser-242 by RPS6KA3/RSK2 in osteoblasts enhances transactivation activity and promotes osteoblast differentiation. Phosphorylated on the betaTrCP degron motif at Ser-215, followed by phosphorylation at Ser-220, Ser-227, Ser-231 and Ser-245, promoting interaction with BTRC and ubiquitination. Phosphorylation is promoted by mTORC1. Phosphorylation at Ser-211 by CK2 decreases its stability. Phosphorylated by NEK6. Hydroxylated by PHD3, leading to decreased protein stability.

It localises to the nucleus. Its subcellular location is the nucleus speckle. The protein localises to the cytoplasm. The protein resides in the cell membrane. It is found in the cytoskeleton. It localises to the microtubule organizing center. Its subcellular location is the centrosome. Its function is as follows. Transcription factor that binds the cAMP response element (CRE) (consensus: 5'-GTGACGT[AC][AG]-3') and displays two biological functions, as regulator of metabolic and redox processes under normal cellular conditions, and as master transcription factor during integrated stress response (ISR). Binds to asymmetric CRE's as a heterodimer and to palindromic CRE's as a homodimer. Core effector of the ISR, which is required for adaptation to various stress such as endoplasmic reticulum (ER) stress, amino acid starvation, mitochondrial stress or oxidative stress. During ISR, ATF4 translation is induced via an alternative ribosome translation re-initiation mechanism in response to EIF2S1/eIF-2-alpha phosphorylation, and stress-induced ATF4 acts as a master transcription factor of stress-responsive genes in order to promote cell recovery. Promotes the transcription of genes linked to amino acid sufficiency and resistance to oxidative stress to protect cells against metabolic consequences of ER oxidation. Activates the transcription of NLRP1, possibly in concert with other factors in response to ER stress. Activates the transcription of asparagine synthetase (ASNS) in response to amino acid deprivation or ER stress. However, when associated with DDIT3/CHOP, the transcriptional activation of the ASNS gene is inhibited in response to amino acid deprivation. Together with DDIT3/CHOP, mediates programmed cell death by promoting the expression of genes involved in cellular amino acid metabolic processes, mRNA translation and the terminal unfolded protein response (terminal UPR), a cellular response that elicits programmed cell death when ER stress is prolonged and unresolved. Activates the expression of COX7A2L/SCAF1 downstream of the EIF2AK3/PERK-mediated unfolded protein response, thereby promoting formation of respiratory chain supercomplexes and increasing mitochondrial oxidative phosphorylation. Together with DDIT3/CHOP, activates the transcription of the IRS-regulator TRIB3 and promotes ER stress-induced neuronal cell death by regulating the expression of BBC3/PUMA in response to ER stress. May cooperate with the UPR transcriptional regulator QRICH1 to regulate ER protein homeostasis which is critical for cell viability in response to ER stress. In the absence of stress, ATF4 translation is at low levels and it is required for normal metabolic processes such as embryonic lens formation, fetal liver hematopoiesis, bone development and synaptic plasticity. Acts as a regulator of osteoblast differentiation in response to phosphorylation by RPS6KA3/RSK2: phosphorylation in osteoblasts enhances transactivation activity and promotes expression of osteoblast-specific genes and post-transcriptionally regulates the synthesis of Type I collagen, the main constituent of the bone matrix. Cooperates with FOXO1 in osteoblasts to regulate glucose homeostasis through suppression of beta-cell production and decrease in insulin production. Activates transcription of SIRT4. Regulates the circadian expression of the core clock component PER2 and the serotonin transporter SLC6A4. Binds in a circadian time-dependent manner to the cAMP response elements (CRE) in the SLC6A4 and PER2 promoters and periodically activates the transcription of these genes. Mainly acts as a transcriptional activator in cellular stress adaptation, but it can also act as a transcriptional repressor: acts as a regulator of synaptic plasticity by repressing transcription, thereby inhibiting induction and maintenance of long-term memory. Regulates synaptic functions via interaction with DISC1 in neurons, which inhibits ATF4 transcription factor activity by disrupting ATF4 dimerization and DNA-binding. This is Cyclic AMP-dependent transcription factor ATF-4 from Bos taurus (Bovine).